The sequence spans 249 residues: MGGSTSKNSFKNTTNIISHSIFNQMQNCISMLDGTNYIGVFGDGNIINHVFQDLNLSLDTSCVQKHVNEENFITNLSNQITQNLKDQEVALTQWMDAGHHDQKTDIEENIKVNLKTTLIQNCVSALSGMNVLVVKGNGNIVENATQKQSQQIISNCLQGSKQAIDTTTGITNTVNQYSHYTSKNFFEFIADAISAVFKNIMVAAVVIVVIIVGFIAVFYFLHSRHRHEEEEEAEPLITSKILKNAAVSQ.

G2 carries the N-myristoyl glycine; by host lipid modification. Topologically, residues 2-199 (GGSTSKNSFK…ADAISAVFKN (198 aa)) are cytoplasmic. Residues 200 to 220 (IMVAAVVIVVIIVGFIAVFYF) traverse the membrane as a helical segment. The Extracellular portion of the chain corresponds to 221–249 (LHSRHRHEEEEEAEPLITSKILKNAAVSQ).

The protein belongs to the asfivirus E248R family. In terms of assembly, interacts with A151R.

The protein localises to the host membrane. Its subcellular location is the virion membrane. Its function is as follows. Essential for viral fusion with host endosomal membrane and core release. The sequence is that of Inner membrane protein pE248R from African swine fever virus (isolate Pig/Kenya/KEN-50/1950) (ASFV).